The chain runs to 183 residues: Potassium-transporting ATPase KdpC subunit (183 aa).

Residues 10–30 (ASLLVLSLVTGVAYPLLVTGI) traverse the membrane as a helical segment.

Belongs to the KdpC family. In terms of assembly, the system is composed of three essential subunits: KdpA, KdpB and KdpC.

It is found in the cell inner membrane. Part of the high-affinity ATP-driven potassium transport (or Kdp) system, which catalyzes the hydrolysis of ATP coupled with the electrogenic transport of potassium into the cytoplasm. This subunit acts as a catalytic chaperone that increases the ATP-binding affinity of the ATP-hydrolyzing subunit KdpB by the formation of a transient KdpB/KdpC/ATP ternary complex. In Pseudomonas aeruginosa (strain ATCC 15692 / DSM 22644 / CIP 104116 / JCM 14847 / LMG 12228 / 1C / PRS 101 / PAO1), this protein is Potassium-transporting ATPase KdpC subunit.